The following is a 198-amino-acid chain: Outer-membrane lipoprotein carrier protein (198 aa).

An N-terminal signal peptide occupies residues 1-17 (MKKFLFSLCLLSSTVLA).

It belongs to the LolA family. Monomer.

It localises to the periplasm. Functionally, participates in the translocation of lipoproteins from the inner membrane to the outer membrane. Only forms a complex with a lipoprotein if the residue after the N-terminal Cys is not an aspartate (The Asp acts as a targeting signal to indicate that the lipoprotein should stay in the inner membrane). The chain is Outer-membrane lipoprotein carrier protein from Aliivibrio fischeri (strain ATCC 700601 / ES114) (Vibrio fischeri).